The primary structure comprises 299 residues: Cytidine deaminase (299 aa).

CMP/dCMP-type deaminase domains are found at residues 56 to 176 (SKIE…FGPK) and 194 to 299 (LQGD…YIAV). Substrate is bound at residue 97 to 99 (NQE). His110 contacts Zn(2+). Glu112 serves as the catalytic Proton donor. 2 residues coordinate Zn(2+): Cys137 and Cys140.

It belongs to the cytidine and deoxycytidylate deaminase family. As to quaternary structure, homodimer. Zn(2+) is required as a cofactor.

It catalyses the reaction cytidine + H2O + H(+) = uridine + NH4(+). It carries out the reaction 2'-deoxycytidine + H2O + H(+) = 2'-deoxyuridine + NH4(+). This enzyme scavenges exogenous and endogenous cytidine and 2'-deoxycytidine for UMP synthesis. The polypeptide is Cytidine deaminase (Haemophilus ducreyi (strain 35000HP / ATCC 700724)).